The chain runs to 374 residues: Pectate lyase 1 (374 aa).

An N-terminal signal peptide occupies residues 1–21 (MDSPCLVALLVFSFVIGSCFS). 2 disulfides stabilise this stretch: Cys-28-Cys-45 and Cys-128-Cys-147. N-linked (GlcNAc...) asparagine glycosylation occurs at Asn-158. Ca(2+) is bound at residue Asp-170. The N-linked (GlcNAc...) (complex) asparagine glycan is linked to Asn-191. Ca(2+) is bound by residues Asp-194 and Asp-198. Arg-250 is a catalytic residue. An N-linked (GlcNAc...) asparagine glycan is attached at Asn-293. Cys-306 and Cys-312 are disulfide-bonded. Asn-354 carries N-linked (GlcNAc...) (complex) asparagine glycosylation.

It belongs to the polysaccharide lyase 1 family. Amb a subfamily. Ca(2+) serves as cofactor. Post-translationally, N-glycosylated; contains fucose and xylose.

The enzyme catalyses Eliminative cleavage of (1-&gt;4)-alpha-D-galacturonan to give oligosaccharides with 4-deoxy-alpha-D-galact-4-enuronosyl groups at their non-reducing ends.. It participates in glycan metabolism; pectin degradation; 2-dehydro-3-deoxy-D-gluconate from pectin: step 2/5. Has pectate lyase activity. This chain is Pectate lyase 1, found in Cryptomeria japonica (Japanese cedar).